Reading from the N-terminus, the 60-residue chain is DNA gyrase inhibitor YacG (60 aa).

Zn(2+)-binding residues include C15, C18, C30, and C34.

This sequence belongs to the DNA gyrase inhibitor YacG family. As to quaternary structure, interacts with GyrB. Requires Zn(2+) as cofactor.

In terms of biological role, inhibits all the catalytic activities of DNA gyrase by preventing its interaction with DNA. Acts by binding directly to the C-terminal domain of GyrB, which probably disrupts DNA binding by the gyrase. This is DNA gyrase inhibitor YacG from Bradyrhizobium diazoefficiens (strain JCM 10833 / BCRC 13528 / IAM 13628 / NBRC 14792 / USDA 110).